The primary structure comprises 162 residues: MAKKKSKSSNSNTIALNKKARHNYSLTDKFEGGMSLQGWEIKSIRSGKVNISDCYVHIKDREAYLLGAEISPLNAASSHVVCDPNRDRKLLLNRRELDKIIAAVERDGYSLIATAMYWKACWVKLEFYLGKGKKDHDKRSDIKDREWAVDKGRLMKNKNLDR.

This sequence belongs to the SmpB family.

Its subcellular location is the cytoplasm. Required for rescue of stalled ribosomes mediated by trans-translation. Binds to transfer-messenger RNA (tmRNA), required for stable association of tmRNA with ribosomes. tmRNA and SmpB together mimic tRNA shape, replacing the anticodon stem-loop with SmpB. tmRNA is encoded by the ssrA gene; the 2 termini fold to resemble tRNA(Ala) and it encodes a 'tag peptide', a short internal open reading frame. During trans-translation Ala-aminoacylated tmRNA acts like a tRNA, entering the A-site of stalled ribosomes, displacing the stalled mRNA. The ribosome then switches to translate the ORF on the tmRNA; the nascent peptide is terminated with the 'tag peptide' encoded by the tmRNA and targeted for degradation. The ribosome is freed to recommence translation, which seems to be the essential function of trans-translation. The sequence is that of SsrA-binding protein from Colwellia psychrerythraea (strain 34H / ATCC BAA-681) (Vibrio psychroerythus).